The chain runs to 277 residues: Large ribosomal subunit protein uL2 (277 aa).

Residues threonine 219 to lysine 277 are disordered. Residues threonine 259–lysine 277 show a composition bias toward basic residues.

It belongs to the universal ribosomal protein uL2 family. In terms of assembly, part of the 50S ribosomal subunit. Forms a bridge to the 30S subunit in the 70S ribosome.

One of the primary rRNA binding proteins. Required for association of the 30S and 50S subunits to form the 70S ribosome, for tRNA binding and peptide bond formation. It has been suggested to have peptidyltransferase activity; this is somewhat controversial. Makes several contacts with the 16S rRNA in the 70S ribosome. In Streptococcus equi subsp. zooepidemicus (strain MGCS10565), this protein is Large ribosomal subunit protein uL2.